The sequence spans 90 residues: FMRFamide-like neuropeptides 27 (90 aa).

An N-terminal signal peptide occupies residues 1-24 (MFSFRKFLAFMLIVIALMASFSSA). Residues 25–36 (QPIDEERPIFME) constitute a propeptide that is removed on maturation. Phe-61 bears the Phenylalanine amide mark. The propeptide occupies 65 to 90 (SSSPSDISMAELRAIYGGGPVEYVQL).

Belongs to the FARP (FMRFamide related peptide) family.

It localises to the secreted. Functionally, FMRFamides and FMRFamide-like peptides are neuropeptides. This is FMRFamide-like neuropeptides 27 from Caenorhabditis briggsae.